Consider the following 183-residue polypeptide: PLAT domain-containing protein 2 (183 aa).

The N-terminal stretch at 1 to 25 is a signal peptide; that stretch reads MMPRRDVLFLSLLLVIATVSAVALA. Residues 31 to 158 form the PLAT domain; that stretch reads CVYTFFLRTG…SPYELSAVRN (128 aa).

It localises to the endoplasmic reticulum. Involved in response to abiotic stress. This chain is PLAT domain-containing protein 2, found in Arabidopsis thaliana (Mouse-ear cress).